Consider the following 297-residue polypeptide: MTTEVRADLYPSRGAAEMTTPRQDPVIWSAPGAPGPVAAKDLQGYEHDGFLTVDQLIAPDEVAVYQAELNRLISDPAVRADERSIVEKQSQNVRSVFEVHRISEVFAGLVRDERVVGRARQILGSDVYVHQSRINVKPGFGATGFYWHSDFETWHAEDGLPNMRTVSVSIALTENFDTNGGLMIMPGSHKTFLGCAGETPKDNYKKSLQMQDAGTPSDEALTKMADRHGIRLFTGRAGSATWFDCNAMHGSGDNITPYARSNVFIVFNSVENAAQEPFAAPIRRPEFIGARDFTPVK.

An L-ectoine-binding site is contributed by glutamine 131. Residue lysine 137 participates in 2-oxoglutarate binding. Positions 148, 150, and 249 each coordinate Fe cation.

Belongs to the PhyH family. EctD subfamily. As to quaternary structure, homodimer. Fe(2+) is required as a cofactor.

The enzyme catalyses L-ectoine + 2-oxoglutarate + O2 = 5-hydroxyectoine + succinate + CO2. Involved in the biosynthesis of 5-hydroxyectoine, called compatible solute, which helps organisms to survive extreme osmotic stress by acting as a highly soluble organic osmolyte. Catalyzes the 2-oxoglutarate-dependent selective hydroxylation of L-ectoine to yield (4S,5S)-5-hydroxyectoine. This chain is Ectoine dioxygenase, found in Streptomyces anulatus (Streptomyces chrysomallus).